Here is a 177-residue protein sequence, read N- to C-terminus: Large ribosomal subunit protein uL10 (177 aa).

The protein belongs to the universal ribosomal protein uL10 family. In terms of assembly, part of the ribosomal stalk of the 50S ribosomal subunit. The N-terminus interacts with L11 and the large rRNA to form the base of the stalk. The C-terminus forms an elongated spine to which L12 dimers bind in a sequential fashion forming a multimeric L10(L12)X complex.

Functionally, forms part of the ribosomal stalk, playing a central role in the interaction of the ribosome with GTP-bound translation factors. This chain is Large ribosomal subunit protein uL10, found in Xanthomonas campestris pv. campestris (strain 8004).